We begin with the raw amino-acid sequence, 380 residues long: NADPH quinone oxidoreductase (380 aa).

A mitochondrion-targeting transit peptide spans 1–17 (MSSFLSKRFISTTQRAM).

Belongs to the zinc-containing alcohol dehydrogenase family. Quinone oxidoreductase subfamily. As to quaternary structure, homodimer.

The protein localises to the mitochondrion. The enzyme catalyses a quinone + NADH + H(+) = a quinol + NAD(+). It carries out the reaction a quinone + NADPH + H(+) = a quinol + NADP(+). Its function is as follows. NADPH quinone oxidoreductase that efficiently reduces 1,4-benzoquinone, whereas no activities are found for menadiones and methoxyquinones. The protein is NADPH quinone oxidoreductase of Kluyveromyces marxianus (Yeast).